The primary structure comprises 207 residues: Vexin (207 aa).

The segment at 56–100 (ELLPHRGDRRDPGDRRRFGRLQTARPPTAHPAKASARPVGISEPK) is disordered. Basic and acidic residues predominate over residues 58-71 (LPHRGDRRDPGDRR).

The protein belongs to the vexin family.

It is found in the cell membrane. Its subcellular location is the nucleus. Functionally, required for neurogenesis in the neural plate and retina. Strongly cooperates with neural bHLH factors to promote neurogenesis. This chain is Vexin, found in Homo sapiens (Human).